Reading from the N-terminus, the 548-residue chain is Peptide chain release factor 3 (548 aa).

The tr-type G domain maps to 23–290; it reads ERRRTFGIIS…ALLDWAPPPQ (268 aa). GTP contacts are provided by residues 32 to 39, 100 to 104, and 154 to 157; these read SHPDAGKT, DTPGH, and NKMD.

The protein belongs to the TRAFAC class translation factor GTPase superfamily. Classic translation factor GTPase family. PrfC subfamily.

It localises to the cytoplasm. In terms of biological role, increases the formation of ribosomal termination complexes and stimulates activities of RF-1 and RF-2. It binds guanine nucleotides and has strong preference for UGA stop codons. It may interact directly with the ribosome. The stimulation of RF-1 and RF-2 is significantly reduced by GTP and GDP, but not by GMP. The protein is Peptide chain release factor 3 of Aromatoleum aromaticum (strain DSM 19018 / LMG 30748 / EbN1) (Azoarcus sp. (strain EbN1)).